The chain runs to 434 residues: Pre-B-cell leukemia transcription factor 3 (434 aa).

The tract at residues 20-41 (SVQGGMALPPPPHGHEGADGDG) is disordered. The span at 32–41 (HGHEGADGDG) shows a compositional bias: basic and acidic residues. One can recognise a PBC domain in the interval 41–234 (GRKQDIGDIL…VMILRSRFLD (194 aa)). Residues 48–127 (DILHQIMTIT…EGVSGPEKGG (80 aa)) are PBC-A. The tract at residues 130-234 (AAAAAAAAAS…VMILRSRFLD (105 aa)) is PBC-B. Positions 235 to 297 (ARRKRRNFSK…NKRIRYKKNI (63 aa)) form a DNA-binding region, homeobox; TALE-type. The segment covering 326 to 341 (NQTNSPTTPNSGSSGS) has biased composition (low complexity). Disordered stretches follow at residues 326–349 (NQTN…NSGD) and 403–434 (LNAN…DTSN). Residues 403 to 422 (LNANGGWQDATTPSSVTSPT) are compositionally biased toward polar residues.

This sequence belongs to the TALE/PBX homeobox family. Interacts with PBXIP1. In terms of tissue distribution, ubiquitously expressed.

The protein localises to the nucleus. Its function is as follows. Transcriptional activator that binds the sequence 5'-ATCAATCAA-3'. The chain is Pre-B-cell leukemia transcription factor 3 (PBX3) from Homo sapiens (Human).